We begin with the raw amino-acid sequence, 156 residues long: Snaclec 2 (156 aa).

A signal peptide spans 1 to 21 (MGRFIFLSSGLLVVFLSLSGA). 3 cysteine pairs are disulfide-bonded: C25-C36, C53-C150, and C125-C142. The 120-residue stretch at 32 to 151 (FDQHCYRAFD…CGDDYPFVCK (120 aa)) folds into the C-type lectin domain.

It belongs to the snaclec family. As to quaternary structure, heterodimer; disulfide-linked. As to expression, expressed by the venom gland.

Its subcellular location is the secreted. Functionally, interferes with one step of hemostasis (modulation of platelet aggregation, or coagulation cascade, for example). The sequence is that of Snaclec 2 from Bitis gabonica (Gaboon adder).